The primary structure comprises 315 residues: MSESLRIIFAGTPDFAARHLDALLSSGHNVVGVFTQPDRPAGRGKKLMPSPVKVLAEEKGLPVFQPVSLRPQENQQLVADLQADVMVVVAYGLILPKAVLEMPRLGCINVHGSLLPRWRGAAPIQRSLWAGDAETGVTIMQMDVGLDTGDMLYKLSCPITAEDTSGTLYDKLAELGPQGLITTLKQLADGTAKPEVQDETLVTYAEKLSKEEARIDWSLSAAQLERCIRAFNPWPMSWLEIEGQPVKVWKASVIDTATNAAPGTILEANKQGIQVATGGGILNLLSLQPAGKKAMSAQDLLNSRREWFVPGNRLV.

113 to 116 provides a ligand contact to (6S)-5,6,7,8-tetrahydrofolate; it reads SLLP.

This sequence belongs to the Fmt family.

The enzyme catalyses L-methionyl-tRNA(fMet) + (6R)-10-formyltetrahydrofolate = N-formyl-L-methionyl-tRNA(fMet) + (6S)-5,6,7,8-tetrahydrofolate + H(+). Functionally, attaches a formyl group to the free amino group of methionyl-tRNA(fMet). The formyl group appears to play a dual role in the initiator identity of N-formylmethionyl-tRNA by promoting its recognition by IF2 and preventing the misappropriation of this tRNA by the elongation apparatus. The sequence is that of Methionyl-tRNA formyltransferase from Escherichia fergusonii (strain ATCC 35469 / DSM 13698 / CCUG 18766 / IAM 14443 / JCM 21226 / LMG 7866 / NBRC 102419 / NCTC 12128 / CDC 0568-73).